A 692-amino-acid polypeptide reads, in one-letter code: Elongation factor G (692 aa).

One can recognise a tr-type G domain in the interval Ala-8–Leu-282. GTP contacts are provided by residues Ala-17–Thr-24, Asp-81–His-85, and Asn-135–Asp-138.

It belongs to the TRAFAC class translation factor GTPase superfamily. Classic translation factor GTPase family. EF-G/EF-2 subfamily.

The protein resides in the cytoplasm. In terms of biological role, catalyzes the GTP-dependent ribosomal translocation step during translation elongation. During this step, the ribosome changes from the pre-translocational (PRE) to the post-translocational (POST) state as the newly formed A-site-bound peptidyl-tRNA and P-site-bound deacylated tRNA move to the P and E sites, respectively. Catalyzes the coordinated movement of the two tRNA molecules, the mRNA and conformational changes in the ribosome. This chain is Elongation factor G (fus), found in Streptococcus pyogenes serotype M1.